The following is a 91-amino-acid chain: Tityustoxin-19 (91 aa).

The signal sequence occupies residues 1 to 25 (MVATNRCCVFALLFALLLVHSLTEA). A BetaSPN-type CS-alpha/beta domain is found at 58–91 (EYACPAIDKFCEDHCAAKKAVGKCDDFKCNCIKL). 3 disulfides stabilise this stretch: Cys-61-Cys-81, Cys-68-Cys-86, and Cys-72-Cys-88.

It belongs to the long chain scorpion toxin family. Class 2 subfamily. In terms of tissue distribution, expressed by the venom gland.

The protein resides in the secreted. Its function is as follows. May function as a voltage-gated potassium channel blocker and may have cytolytic activity. Is often not detected in the tested venom fractions, suggesting that the toxin is likely subject to frequent processing within the venom. In terms of biological role, specific and reversible blocker of the potassium channel Kv1.2/KCNA2 (IC(50)=544 nM). Shows cytolytic effects on erythrocytes and induces non-selective pore formation when high concentrations (300 nM) are applied on oocytes. Functionally, does not cause hemolysis, mast cell degranulation, LDH release, and does not have antimicrobial activity. Does not cause edema and pain. The polypeptide is Tityustoxin-19 (Tityus serrulatus (Brazilian scorpion)).